The chain runs to 188 residues: Proline-rich protein 3 (188 aa).

The tract at residues 1 to 157 (MPKRKKQNHH…DPQVMEDKSD (157 aa)) is disordered. 2 stretches are compositionally biased toward pro residues: residues 35 to 46 (IGPPSLLGPPPM) and 69 to 82 (LIPP…PPWG). Residues 83 to 96 (RGPIRRGLGPRSSP) show a composition bias toward low complexity. Positions 145–157 (PKDDPQVMEDKSD) are enriched in basic and acidic residues. The C3H1-type zinc-finger motif lies at 155–183 (KSDRPVCRHFAKKGHCRYEDLCAFYHPGV).

The protein is Proline-rich protein 3 (PRR3) of Homo sapiens (Human).